The following is an 88-amino-acid chain: Apolipoprotein C-I (88 aa).

The signal sequence occupies residues Met-1–Ala-26.

The protein belongs to the apolipoprotein C1 family.

It is found in the secreted. In terms of biological role, inhibitor of lipoprotein binding to the low density lipoprotein (LDL) receptor, LDL receptor-related protein, and very low density lipoprotein (VLDL) receptor. Associates with high density lipoproteins (HDL) and the triacylglycerol-rich lipoproteins in the plasma and makes up about 10% of the protein of the VLDL and 2% of that of HDL. Appears to interfere directly with fatty acid uptake and is also the major plasma inhibitor of cholesteryl ester transfer protein (CETP). Binds free fatty acids and reduces their intracellular esterification. Modulates the interaction of APOE with beta-migrating VLDL and inhibits binding of beta-VLDL to the LDL receptor-related protein. This is Apolipoprotein C-I (APOC1) from Lycaon pictus (African wild dog).